A 508-amino-acid chain; its full sequence is Photosystem II CP47 reaction center protein (508 aa).

6 helical membrane-spanning segments follow: residues 21–36 (SVHIMHTALVSGWAGS), 101–115 (IVFSGLCFLAAIWHW), 140–156 (GIHLFLAGVACFGFGAF), 203–218 (IAAGTLGILAGLFHLS), 237–252 (VLSSSIAAVFFAAFVV), and 457–472 (TFALLFFFGHIWHGAR).

The protein belongs to the PsbB/PsbC family. PsbB subfamily. PSII is composed of 1 copy each of membrane proteins PsbA, PsbB, PsbC, PsbD, PsbE, PsbF, PsbH, PsbI, PsbJ, PsbK, PsbL, PsbM, PsbT, PsbX, PsbY, PsbZ, Psb30/Ycf12, at least 3 peripheral proteins of the oxygen-evolving complex and a large number of cofactors. It forms dimeric complexes. Requires Binds multiple chlorophylls. PSII binds additional chlorophylls, carotenoids and specific lipids. as cofactor.

The protein resides in the plastid. It is found in the chloroplast thylakoid membrane. In terms of biological role, one of the components of the core complex of photosystem II (PSII). It binds chlorophyll and helps catalyze the primary light-induced photochemical processes of PSII. PSII is a light-driven water:plastoquinone oxidoreductase, using light energy to abstract electrons from H(2)O, generating O(2) and a proton gradient subsequently used for ATP formation. This chain is Photosystem II CP47 reaction center protein, found in Oryza sativa subsp. indica (Rice).